A 319-amino-acid chain; its full sequence is Thioredoxin reductase (319 aa).

36-48 (EGFMAGGVAAGGQ) lines the FAD pocket. Residues C144 and C147 are joined by a disulfide bond. 289-298 (DVQDKVYRQA) is an FAD binding site.

Belongs to the class-II pyridine nucleotide-disulfide oxidoreductase family. As to quaternary structure, homodimer. The cofactor is FAD.

It carries out the reaction [thioredoxin]-dithiol + NADP(+) = [thioredoxin]-disulfide + NADPH + H(+). This Dictyostelium discoideum (Social amoeba) protein is Thioredoxin reductase (trrA).